A 224-amino-acid polypeptide reads, in one-letter code: Viral late gene transcription factor 3 (224 aa).

A zinc finger lies at Cys6–Cys26.

It belongs to the orthopoxvirus VLTF-3/OPG127 family. Interacts with the late transcription elongation factor VLTF-4/OPG110. Interacts with the late transcription factors VLTF-1/OPG093.

Functionally, acts with RNA polymerase to initiate transcription from late gene promoters. This is Viral late gene transcription factor 3 (OPG127) from Vaccinia virus (strain Ankara) (VACV).